Reading from the N-terminus, the 90-residue chain is UPF0297 protein OEOE_1166 (90 aa).

Belongs to the UPF0297 family.

This Oenococcus oeni (strain ATCC BAA-331 / PSU-1) protein is UPF0297 protein OEOE_1166.